The chain runs to 149 residues: Small heat shock protein IbpB (149 aa).

The region spanning 26–137 (SQEPIDFPPY…QPQRIAIGGG (112 aa)) is the sHSP domain.

It belongs to the small heat shock protein (HSP20) family. In terms of assembly, homodimer. Forms homomultimers of about 100-150 subunits at optimal growth temperatures. Conformation changes to oligomers at high temperatures or high ionic concentrations. The decrease in size of the multimers is accompanied by an increase in chaperone activity.

Its subcellular location is the cytoplasm. In terms of biological role, associates with aggregated proteins, together with IbpA, to stabilize and protect them from irreversible denaturation and extensive proteolysis during heat shock and oxidative stress. Aggregated proteins bound to the IbpAB complex are more efficiently refolded and reactivated by the ATP-dependent chaperone systems ClpB and DnaK/DnaJ/GrpE. Its activity is ATP-independent. This chain is Small heat shock protein IbpB, found in Pectobacterium carotovorum subsp. carotovorum (strain PC1).